The chain runs to 1137 residues: Protein sel-1 homolog 3 (1137 aa).

Positions Met-1–Ser-42 are disordered. 2 N-linked (GlcNAc...) asparagine glycosylation sites follow: Asn-206 and Asn-387. 7 Sel1-like repeats span residues His-575–Ser-609, Arg-611–Pro-647, Ala-694–Glu-730, Pro-732–Leu-767, His-768–Asn-800, Pro-801–His-839, and Ile-840–Gly-877. Ser-613 bears the Phosphoserine mark. Asn-942 carries an N-linked (GlcNAc...) asparagine glycan. The stretch at Ser-952–Asp-988 is one Sel1-like 8 repeat. Residues Leu-1067–Leu-1087 traverse the membrane as a helical segment. Residues Ala-1100 to Gly-1137 are disordered. Residues Val-1102–Asp-1120 are compositionally biased toward low complexity.

The protein resides in the membrane. In Mus musculus (Mouse), this protein is Protein sel-1 homolog 3 (Sel1l3).